Reading from the N-terminus, the 482-residue chain is Probable F-box protein At1g30780 (482 aa).

In terms of domain architecture, F-box spans 230–280 (EIDLDSLPFDLKMVILTRLSAKSLTNFKRVSKMWSSIIGSQRFIDSFFTMS).

The chain is Probable F-box protein At1g30780 from Arabidopsis thaliana (Mouse-ear cress).